Here is a 399-residue protein sequence, read N- to C-terminus: Arylacetamide deacetylase (399 aa).

Residues 1–4 (MRKK) lie on the Cytoplasmic side of the membrane. A helical; Signal-anchor for type II membrane protein membrane pass occupies residues 5 to 25 (YFGFLILGVLLAGYIYVPLPD). The Lumenal portion of the chain corresponds to 26–399 (NVEEPWKIML…QYINWLHENL (374 aa)). Residues 111–113 (HGG) carry the Involved in the stabilization of the negatively charged intermediate by the formation of the oxyanion hole motif. Cysteines 116 and 340 form a disulfide. Residue Ser189 is part of the active site. Residue Asn282 is glycosylated (N-linked (GlcNAc...) asparagine). Active-site residues include Asp343 and His373.

Belongs to the 'GDXG' lipolytic enzyme family.

Its subcellular location is the endoplasmic reticulum membrane. It localises to the microsome membrane. It carries out the reaction a triacylglycerol + H2O = a diacylglycerol + a fatty acid + H(+). Functionally, displays cellular triglyceride lipase activity in liver, increases the levels of intracellular fatty acids derived from the hydrolysis of newly formed triglyceride stores and plays a role in very low-density lipoprotein assembly. Displays serine esterase activity in liver. Deacetylates a variety of arylacetamide substrates, including xenobiotic compounds and procarcinogens, converting them to the primary arylamide compounds and increasing their toxicity. This chain is Arylacetamide deacetylase (AADAC), found in Bos taurus (Bovine).